Consider the following 874-residue polypeptide: Alanine--tRNA ligase (874 aa).

Residues histidine 563, histidine 567, cysteine 665, and histidine 669 each coordinate Zn(2+).

The protein belongs to the class-II aminoacyl-tRNA synthetase family. Requires Zn(2+) as cofactor.

The protein resides in the cytoplasm. It catalyses the reaction tRNA(Ala) + L-alanine + ATP = L-alanyl-tRNA(Ala) + AMP + diphosphate. Catalyzes the attachment of alanine to tRNA(Ala) in a two-step reaction: alanine is first activated by ATP to form Ala-AMP and then transferred to the acceptor end of tRNA(Ala). Also edits incorrectly charged Ser-tRNA(Ala) and Gly-tRNA(Ala) via its editing domain. This is Alanine--tRNA ligase from Haemophilus influenzae (strain PittGG).